A 353-amino-acid chain; its full sequence is UDP-N-acetylglucosamine--N-acetylmuramyl-(pentapeptide) pyrophosphoryl-undecaprenol N-acetylglucosamine transferase (353 aa).

Residues 10-12 (TGG), N124, S183, and Q283 each bind UDP-N-acetyl-alpha-D-glucosamine.

It belongs to the glycosyltransferase 28 family. MurG subfamily.

The protein resides in the cell inner membrane. It catalyses the reaction di-trans,octa-cis-undecaprenyl diphospho-N-acetyl-alpha-D-muramoyl-L-alanyl-D-glutamyl-meso-2,6-diaminopimeloyl-D-alanyl-D-alanine + UDP-N-acetyl-alpha-D-glucosamine = di-trans,octa-cis-undecaprenyl diphospho-[N-acetyl-alpha-D-glucosaminyl-(1-&gt;4)]-N-acetyl-alpha-D-muramoyl-L-alanyl-D-glutamyl-meso-2,6-diaminopimeloyl-D-alanyl-D-alanine + UDP + H(+). The protein operates within cell wall biogenesis; peptidoglycan biosynthesis. In terms of biological role, cell wall formation. Catalyzes the transfer of a GlcNAc subunit on undecaprenyl-pyrophosphoryl-MurNAc-pentapeptide (lipid intermediate I) to form undecaprenyl-pyrophosphoryl-MurNAc-(pentapeptide)GlcNAc (lipid intermediate II). The protein is UDP-N-acetylglucosamine--N-acetylmuramyl-(pentapeptide) pyrophosphoryl-undecaprenol N-acetylglucosamine transferase of Helicobacter pylori (strain G27).